The primary structure comprises 66 residues: DNA gyrase inhibitor YacG (66 aa).

Zn(2+) is bound by residues cysteine 9, cysteine 12, cysteine 28, and cysteine 32. A disordered region spans residues 45–66 (HKIAGSQESEDELYSGDLEPRH).

Belongs to the DNA gyrase inhibitor YacG family. As to quaternary structure, interacts with GyrB. Zn(2+) serves as cofactor.

Inhibits all the catalytic activities of DNA gyrase by preventing its interaction with DNA. Acts by binding directly to the C-terminal domain of GyrB, which probably disrupts DNA binding by the gyrase. This chain is DNA gyrase inhibitor YacG, found in Pseudomonas putida (strain W619).